A 133-amino-acid chain; its full sequence is 14 kDa fatty acid-binding protein (133 aa).

Residues Arg107 and 127 to 129 (RNY) each bind (5Z,8Z,11Z,14Z)-eicosatetraenoate. (9Z)-octadecenoate-binding positions include Arg107 and 127-129 (RNY).

The protein belongs to the calycin superfamily. Fatty-acid binding protein (FABP) family. As to expression, tubercles, muscle layers and body.

The protein localises to the cytoplasm. Functionally, may play a role in the transport of fatty acids. Binds various fatty acids, such as arachidonic, oleic, palmitic and linolenic acid (in vitro). The polypeptide is 14 kDa fatty acid-binding protein (Schistosoma mansoni (Blood fluke)).